Reading from the N-terminus, the 311-residue chain is L-lactate dehydrogenase 2 (311 aa).

NAD(+)-binding residues include Val14, Asp35, and Arg40. Residues Arg90 and 122–125 (NPCD) contribute to the substrate site. NAD(+) is bound by residues 120-122 (ATN) and Thr145. 150–153 (DTTR) contacts substrate. His177 serves as the catalytic Proton acceptor. Thr230 is a substrate binding site.

The protein belongs to the LDH/MDH superfamily. LDH family. As to quaternary structure, homotetramer.

The protein resides in the cytoplasm. The catalysed reaction is (S)-lactate + NAD(+) = pyruvate + NADH + H(+). It participates in fermentation; pyruvate fermentation to lactate; (S)-lactate from pyruvate: step 1/1. Catalyzes the conversion of lactate to pyruvate. The protein is L-lactate dehydrogenase 2 of Listeria monocytogenes serovar 1/2a (strain ATCC BAA-679 / EGD-e).